Reading from the N-terminus, the 362-residue chain is 3-isopropylmalate dehydrogenase (362 aa).

Position 78-91 (78-91) interacts with NAD(+); the sequence is GPKWEHLAPNDQPE. Substrate is bound by residues Arg99, Arg109, Arg138, and Asp227. Mg(2+) contacts are provided by Asp227, Asp251, and Asp255. NAD(+) is bound at residue 285 to 297; it reads GSAPDIAGKNIAN.

Belongs to the isocitrate and isopropylmalate dehydrogenases family. LeuB type 1 subfamily. As to quaternary structure, homodimer. Mg(2+) is required as a cofactor. It depends on Mn(2+) as a cofactor.

It localises to the cytoplasm. The enzyme catalyses (2R,3S)-3-isopropylmalate + NAD(+) = 4-methyl-2-oxopentanoate + CO2 + NADH. It participates in amino-acid biosynthesis; L-leucine biosynthesis; L-leucine from 3-methyl-2-oxobutanoate: step 3/4. Its function is as follows. Catalyzes the oxidation of 3-carboxy-2-hydroxy-4-methylpentanoate (3-isopropylmalate) to 3-carboxy-4-methyl-2-oxopentanoate. The product decarboxylates to 4-methyl-2 oxopentanoate. The polypeptide is 3-isopropylmalate dehydrogenase (Photobacterium profundum (strain SS9)).